The sequence spans 117 residues: Large ribosomal subunit protein uL18 (117 aa).

This sequence belongs to the universal ribosomal protein uL18 family. In terms of assembly, part of the 50S ribosomal subunit; part of the 5S rRNA/L5/L18/L25 subcomplex. Contacts the 5S and 23S rRNAs.

This is one of the proteins that bind and probably mediate the attachment of the 5S RNA into the large ribosomal subunit, where it forms part of the central protuberance. The chain is Large ribosomal subunit protein uL18 from Neisseria gonorrhoeae (strain ATCC 700825 / FA 1090).